The sequence spans 396 residues: Apurinic-apyrimidinic endonuclease (396 aa).

The segment covering Lys-31–Gln-41 has biased composition (basic residues). The tract at residues Lys-31 to Lys-100 is disordered. The span at Asn-55–Asn-70 shows a compositional bias: polar residues. Residues Ser-72–Pro-85 are compositionally biased toward basic and acidic residues. His-185, His-225, Glu-261, Asp-295, His-298, His-332, Asp-345, His-347, and Glu-377 together coordinate Zn(2+).

This sequence belongs to the AP endonuclease 2 family. The cofactor is Zn(2+).

The protein resides in the nucleus. The chain is Apurinic-apyrimidinic endonuclease (apn-1) from Caenorhabditis elegans.